We begin with the raw amino-acid sequence, 122 residues long: Large ribosomal subunit protein uL14 (122 aa).

The protein belongs to the universal ribosomal protein uL14 family. Part of the 50S ribosomal subunit. Forms a cluster with proteins L3 and L19. In the 70S ribosome, L14 and L19 interact and together make contacts with the 16S rRNA in bridges B5 and B8.

Its function is as follows. Binds to 23S rRNA. Forms part of two intersubunit bridges in the 70S ribosome. This is Large ribosomal subunit protein uL14 from Coxiella burnetii (strain RSA 331 / Henzerling II).